The following is a 468-amino-acid chain: Zinc finger protein 672 (468 aa).

C2H2-type zinc fingers lie at residues 15–37 (YSCS…ERAH), 43–65 (FRCL…RWTH), 71–93 (YICS…LGTH), and 100–123 (CPCR…VRQH). A C2H2-type 5; degenerate zinc finger spans residues 129–151 (HRCPLCARSFRQSALPFHLARAH). 9 C2H2-type zinc fingers span residues 167–189 (YHCT…SRIH), 202–224 (HRCG…LQRH), 230–252 (FKCP…QRTH), 258–280 (YACN…QRSH), 286–308 (HICA…QRSH), 314–336 (FPCP…LRTH), 342–364 (YHCE…LRNH), 370–392 (HKCP…RKTH), and 398–420 (AECT…QRSH).

It belongs to the krueppel C2H2-type zinc-finger protein family.

It is found in the nucleus. Functionally, may be involved in transcriptional regulation. This chain is Zinc finger protein 672 (Znf672), found in Rattus norvegicus (Rat).